The primary structure comprises 301 residues: GTPase Era (301 aa).

Residues 7–175 (YCGFIAIVGR…AGIVRKHLPE (169 aa)) form the Era-type G domain. The segment at 15-22 (GRPNVGKS) is G1. Residue 15-22 (GRPNVGKS) participates in GTP binding. The tract at residues 41–45 (QTTRH) is G2. Residues 62–65 (DTPG) are G3. GTP contacts are provided by residues 62-66 (DTPGL) and 124-127 (NKVD). The G4 stretch occupies residues 124 to 127 (NKVD). Residues 154-156 (ISA) form a G5 region. Positions 206–283 (LGAELPYSVT…HLELWVKVKS (78 aa)) constitute a KH type-2 domain.

The protein belongs to the TRAFAC class TrmE-Era-EngA-EngB-Septin-like GTPase superfamily. Era GTPase family. In terms of assembly, monomer.

The protein localises to the cytoplasm. It is found in the cell inner membrane. An essential GTPase that binds both GDP and GTP, with rapid nucleotide exchange. Plays a role in 16S rRNA processing and 30S ribosomal subunit biogenesis and possibly also in cell cycle regulation and energy metabolism. This Salmonella heidelberg (strain SL476) protein is GTPase Era.